The following is a 342-amino-acid chain: S-adenosylmethionine:tRNA ribosyltransferase-isomerase (342 aa).

The protein belongs to the QueA family. As to quaternary structure, monomer.

It is found in the cytoplasm. The enzyme catalyses 7-aminomethyl-7-carbaguanosine(34) in tRNA + S-adenosyl-L-methionine = epoxyqueuosine(34) in tRNA + adenine + L-methionine + 2 H(+). It participates in tRNA modification; tRNA-queuosine biosynthesis. Transfers and isomerizes the ribose moiety from AdoMet to the 7-aminomethyl group of 7-deazaguanine (preQ1-tRNA) to give epoxyqueuosine (oQ-tRNA). This chain is S-adenosylmethionine:tRNA ribosyltransferase-isomerase, found in Streptococcus pneumoniae serotype 4 (strain ATCC BAA-334 / TIGR4).